The sequence spans 465 residues: Putative adhesin P1-like protein MPN_286 (465 aa).

Disordered regions lie at residues 9–48 (GNGH…STFS), 59–78 (QGTL…PKWP), and 93–167 (WRND…LPPN). A compositionally biased stretch (low complexity) spans 21–37 (SNSSTSGVTTQGQQSQN). A compositionally biased stretch (polar residues) spans 38–48 (ASGTEPASTFS). Positions 111-131 (TSATGSGQQGSSSGTTNSAGN) are enriched in low complexity. Positions 135–144 (LKQDKVDKSG) are enriched in basic and acidic residues. Polar residues predominate over residues 145–156 (DSVTVAETTSGD). Positions 157–167 (NLTNYTNLPPN) are enriched in low complexity.

This sequence belongs to the adhesin P1 family.

This Mycoplasma pneumoniae (strain ATCC 29342 / M129 / Subtype 1) (Mycoplasmoides pneumoniae) protein is Putative adhesin P1-like protein MPN_286.